We begin with the raw amino-acid sequence, 344 residues long: Serine/threonine-protein kinase ppk13 (344 aa).

Residues leucine 38 to valine 46 and lysine 61 contribute to the ATP site. Residues methionine 76–glutamine 344 enclose the Protein kinase domain. The active-site Proton acceptor is the histidine 192.

It belongs to the protein kinase superfamily. Ser/Thr protein kinase family.

The protein resides in the endoplasmic reticulum. Its subcellular location is the golgi apparatus. It catalyses the reaction L-seryl-[protein] + ATP = O-phospho-L-seryl-[protein] + ADP + H(+). It carries out the reaction L-threonyl-[protein] + ATP = O-phospho-L-threonyl-[protein] + ADP + H(+). This is Serine/threonine-protein kinase ppk13 (ppk13) from Schizosaccharomyces pombe (strain 972 / ATCC 24843) (Fission yeast).